The following is a 415-amino-acid chain: Ubp4-interactor sfp47 (415 aa).

Ser-221 and Ser-226 each carry phosphoserine. A Phosphothreonine modification is found at Thr-231. Ser-235 is subject to Phosphoserine. The SH3 domain occupies 352–415 (PIFAYVRALY…PSNYIEELEY (64 aa)).

In terms of assembly, interacts with ubp4.

Its subcellular location is the cytoplasm. It is found in the endosome. Its function is as follows. Required for the regulation of activity and recruitment of ubp4 to endosomes. This Schizosaccharomyces pombe (strain 972 / ATCC 24843) (Fission yeast) protein is Ubp4-interactor sfp47 (sfp47).